Consider the following 487-residue polypeptide: Cysteine--tRNA ligase (487 aa).

Cysteine 29 lines the Zn(2+) pocket. A 'HIGH' region motif is present at residues 31–41; it reads VTVYDVNHVGH. Zn(2+) is bound by residues cysteine 209, histidine 234, and glutamate 238. A 'KMSKS' region motif is present at residues 266-270; that stretch reads KMSKS. An ATP-binding site is contributed by lysine 269.

It belongs to the class-I aminoacyl-tRNA synthetase family. Monomer. It depends on Zn(2+) as a cofactor.

Its subcellular location is the cytoplasm. It carries out the reaction tRNA(Cys) + L-cysteine + ATP = L-cysteinyl-tRNA(Cys) + AMP + diphosphate. The polypeptide is Cysteine--tRNA ligase (Persephonella marina (strain DSM 14350 / EX-H1)).